The primary structure comprises 217 residues: Growth factor receptor-bound protein 2 (217 aa).

An N-acetylmethionine modification is found at M1. Positions 1-58 (MEAIAKYDFKATADDELSFKRGDILKVLNEECDQNWYKAELNGKDGFIPKNYIEMKPH) constitute an SH3 1 domain. N6-acetyllysine occurs at positions 6, 50, and 109. The region spanning 60-152 (WFFGKIPRAK…NQQIFLRDIE (93 aa)) is the SH2 domain. K109 participates in a covalent cross-link: Glycyl lysine isopeptide (Lys-Gly) (interchain with G-Cter in ubiquitin). Residues 156-215 (QQPTYVQALFDFDPQEDGELGFRRGDFIHVMDNSDPNWWKGACHGQTGMFPRNYVTPVNR) form the SH3 2 domain. Y209 bears the Phosphotyrosine mark. Phosphothreonine is present on T211.

It belongs to the GRB2/sem-5/DRK family. Homodimer. Associates (via SH2 domain) with activated EGF and PDGF receptors (tyrosine phosphorylated). Interacts with PDGFRA (tyrosine phosphorylated); the interaction may be indirect. Also associates to other cellular Tyr-phosphorylated proteins such as SIT1, IRS1, IRS2, IRS4, SHC and LNK; probably via the concerted action of both its SH2 and SH3 domains. It also seems to interact with RAS in the signaling pathway leading to DNA synthesis. Interacts with SOS1. Forms a complex with MUC1 and SOS1, through interaction of the SH3 domains with SOS1 and the SH2 domain with phosphorylated MUC1. Interacts with phosphorylated MET. Interacts with phosphorylated TOM1L1. Interacts with the phosphorylated C-terminus of SH2B2. Interacts with phosphorylated SIT1, LAX1, LAT, LAT2 and LIME1 upon TCR and/or BCR activation. Interacts with NISCH, PTPNS1 and REPS2. Interacts with syntrophin SNTA1. Interacts (via SH3 domains) with REPS1. Interacts (via SH3 domains) with PIK3C2B. Interacts with CBL and CBLB. Interacts with AJUBA and CLNK. Interacts (via SH2 domain) with TEK/TIE2 (tyrosine phosphorylated). Interacts with SHB, INPP5D/SHIP1, SKAP1 and SKAP2. Interacts with PTPN11. Interacts with PRNP. Interacts with RALGPS1. Interacts with HCST. Interacts with KDR. Interacts with FLT1 (tyrosine-phosphorylated). Interacts with GAPT and PTPRE. Interacts (via SH2 domain) with KIF26A. Interacts (via SH3 2) with GAB2. Interacts with ADAM15. Interacts with THEMIS2. Interacts (via SH2 domain) with AXL (phosphorylated). Interacts (via SH2 domain) with KIT (phosphorylated). Interacts with PTPRJ and BCR. Interacts with PTPN23. Interacts with FLT4 (tyrosine phosphorylated). Interacts with EPHB1 and SHC1; activates the MAPK/ERK cascade to regulate cell migration. Part of a complex including TNK2, GRB2, LTK and one receptor tyrosine kinase (RTK) such as AXL and PDGFRL, in which GRB2 promotes RTK recruitment by TNK2. Interacts (via SH2 domain) with CSF1R (tyrosine phosphorylated). Interacts with ERBB4. Interacts with NTRK1 (phosphorylated upon ligand-binding). Interacts with PTK2/FAK1 (tyrosine phosphorylated). Interacts with PTK2B/PYK2 (tyrosine phosphorylated). Interacts (via SH3 domains) with GAREM1 isoform 1 (via proline-rich domain and tyrosine phosphorylated); the interaction occurs upon EGF stimulation. Interacts with DAB2. Interacts with TESPA1. Interacts with PLCG1, LAT and THEMIS upon TCR activation in thymocytes; the association is weaker in the absence of TESPA1. Interacts with CD28. Interacts with RAB13; may recruit RAB13 to the leading edge of migrating endothelial cells where it can activate RHOA. Interacts with ASAP3 (phosphorylated form). Interacts (via SH2 domain) with PTPRH (phosphorylated form). Interacts with PTPRO (phosphorylated form). Interacts with PTPRB (phosphorylated form). Interacts (via SH3 domain 2) with PRR14 (via proline-rich region). Interacts with FCRL6 (tyrosine phosphorylated form). Interacts with RHEX (via tyrosine-phosphorylated form). Interacts with DENND2B. Interacts with SPRY2. Interacts with LRRC8A. Interacts with PEAK1. Interacts with CD28. Interacts with FCRL1. Interacts with PCNA. Interacts with CD19. Interacts with BECN1. Interacts with RAD51; the interaction inhibits RAD51 ATPase to stabilize RAD51-DNA complex at stalled replication forks. Interacts with MRE11; this interaction recruits MRE11 to the DNA damage sites. Interacts with RIPK1 ans SQSTM1; these interactions play a critical role in regulating programmed necrosis. Interacts with AGO2; this interaction is important for the formation of a ternary complex containing GRB2, AGO2 and DICER1. Interacts with TIGIT; this interaction inhibits PI3K and MAPK signaling cascades. Interacts with CD226; this interaction leads to activation of VAV1, PI3K and PLCG1. As to quaternary structure, interacts (via SH2-domain) with SCIMP; this interaction is dependent on phosphorylation of SCIMP 'Tyr-69'. In terms of assembly, interacts with SOS1; this interaction competes with GRB2 to bind SOS1 via its N-terminal SH3 domain. (Microbial infection) Interacts (via SH3 domain) with hepatitis E virus/HEV ORF3 protein. As to quaternary structure, (Microbial infection) Interacts with hepatitis C virus/HCV protein NS5A via its SH3 domains. In terms of assembly, (Microbial infection) Interacts with herpes simplex virus 1 protein UL46. (Microbial infection) Interacts with B19 parvovirus protein 11K. Phosphorylation of Tyr-209 in the C-terminal SH3 domain reduces its binding to SOS1. Post-translationally, ubiquitinated by RNF173, leading to proteasomal degradation and inhibition of the RAF/MEK/ERK pathway. In the nucleus, polyubiquitinated by RBBP6 at Lys-109 at DNA damage sites.

It localises to the nucleus. It is found in the cytoplasm. The protein resides in the endosome. Its subcellular location is the golgi apparatus. In terms of biological role, non-enzymatic adapter protein that plays a pivotal role in precisely regulated signaling cascades from cell surface receptors to cellular responses, including signaling transduction and gene expression. Thus, participates in many biological processes including regulation of innate and adaptive immunity, autophagy, DNA repair or necroptosis. Controls signaling complexes at the T-cell antigen receptor to facilitate the activation, differentiation, and function of T-cells. Mechanistically, engagement of the TCR leads to phosphorylation of the adapter protein LAT, which serves as docking site for GRB2. In turn, GRB2 establishes a a connection with SOS1 that acts as a guanine nucleotide exchange factor and serves as a critical regulator of KRAS/RAF1 leading to MAPKs translocation to the nucleus and activation. Functions also a role in B-cell activation by amplifying Ca(2+) mobilization and activation of the ERK MAP kinase pathway upon recruitment to the phosphorylated B-cell antigen receptor (BCR). Plays a role in switching between autophagy and programmed necrosis upstream of EGFR by interacting with components of necrosomes including RIPK1 and with autophagy regulators SQSTM1 and BECN1. Regulates miRNA biogenesis by forming a functional ternary complex with AGO2 and DICER1. Functions in the replication stress response by protecting DNA at stalled replication forks from MRE11-mediated degradation. Mechanistically, inhibits RAD51 ATPase activity to stabilize RAD51 on stalled replication forks. Additionally, directly recruits and later releases MRE11 at DNA damage sites during the homology-directed repair (HDR) process. Functionally, does not bind to phosphorylated epidermal growth factor receptor (EGFR) but inhibits EGF-induced transactivation of a RAS-responsive element. Acts as a dominant negative protein over GRB2 and by suppressing proliferative signals, may trigger active programmed cell death. Mechanistically, inhibits RAS-ERK signaling and downstream cell proliferation by competing with GRB2 for SOS1 binding and thus by regulating SOS1 membrane recruitment. The protein is Growth factor receptor-bound protein 2 (GRB2) of Homo sapiens (Human).